We begin with the raw amino-acid sequence, 710 residues long: Probable inactive DNA (cytosine-5)-methyltransferase DRM3 (710 aa).

The disordered stretch occupies residues 1–21 (MADMRRRNGSGGSSNHERNEQ). The UBA 1 domain maps to 52-92 (SGSNVKSLLIEMGFCPTLVQKAIDENGQDDFELLLEILTKS). Residues 167-184 (ESEDSLDGAEINEEDEDV) are compositionally biased toward acidic residues. A disordered region spans residues 167 to 192 (ESEDSLDGAEINEEDEDVTPVTARGP). In terms of domain architecture, UBA 2 spans 198–242 (QLFETMDKTLRLLEMGFSNDEISMAIEKIGTKGQISVLAESIVTG). The interval 282–360 (AQKEDGGGGS…MGDSSSFMET (79 aa)) is disordered. The segment covering 339–350 (YDDRGKRLRPED) has biased composition (basic and acidic residues). Residues 379–710 (QPRLSQSLGP…RVTKRVRDMM (332 aa)) enclose the SAM-dependent MTase DRM-type domain.

This sequence belongs to the class I-like SAM-binding methyltransferase superfamily. DRM-methyltransferase family. In terms of assembly, interacts with Pol V.

It localises to the nucleus. Catalytically inactive DNA methyltransferase that acts as regulatory factor for DRM2-mediated DNA methylation. Required for maintenance of non-CpG DNA methylation. Required for normal establishment and maintenance of RNA-directed DNA methylation (RdDM) and accumulation of specific repeat-associated small interfering RNAs (siRNAs). Required for nucleolus organizer region (NOR) nuclear organization during interphase. Acts downstream of the production of siRNAs. May promote RNA polymerase V (Pol V) transcriptional elongation or assist in the stabilization of Pol V transcripts. This Arabidopsis thaliana (Mouse-ear cress) protein is Probable inactive DNA (cytosine-5)-methyltransferase DRM3.